A 148-amino-acid chain; its full sequence is Urease accessory protein UreE (148 aa).

Belongs to the UreE family.

Its subcellular location is the cytoplasm. In terms of biological role, involved in urease metallocenter assembly. Binds nickel. Probably functions as a nickel donor during metallocenter assembly. This is Urease accessory protein UreE from Aliarcobacter butzleri (strain RM4018) (Arcobacter butzleri).